We begin with the raw amino-acid sequence, 114 residues long: U17-barytoxin-Tl1a (114 aa).

An N-terminal signal peptide occupies residues 1-20 (MKTIIVFLSLLVLATKFGDA). Residues 21 to 74 (NEGVNQEQMKEVIQNEFREDFLNEMAPMSLLQQLEAIESTLLEKEADRNSRQKR) constitute a propeptide that is removed on maturation. 3 disulfides stabilise this stretch: cysteine 75-cysteine 88, cysteine 82-cysteine 93, and cysteine 87-cysteine 108.

This sequence belongs to the neurotoxin 14 (magi-1) family. 03 (ICK-30-40) subfamily. Expressed by the venom gland.

The protein resides in the secreted. Functionally, ion channel inhibitor. This is U17-barytoxin-Tl1a from Trittame loki (Brush-footed trapdoor spider).